An 802-amino-acid polypeptide reads, in one-letter code: Threonine--tRNA ligase 2, cytoplasmic (802 aa).

N-acetylalanine is present on Ala2. Coiled coils occupy residues 3 to 23 and 76 to 96; these read AEAL…EDIR and AEER…AQEA. The span at 86–98 shows a compositional bias: low complexity; that stretch reads ESAELEAAQEAGA. The segment at 86–123 is disordered; it reads ESAELEAAQEAGAQPPPSQSQDKDMKKKKMKESEADSE. The segment covering 106–123 has biased composition (basic and acidic residues); that stretch reads QDKDMKKKKMKESEADSE. The region spanning 157–222 is the TGS domain; sequence DTSNIITVRV…EGDSSLELLT (66 aa). Ser453 is modified (phosphoserine). The short motif at 786–792 is the Nuclear localization signal element; the sequence is KLKNLRK.

This sequence belongs to the class-II aminoacyl-tRNA synthetase family. May be a component of the multisynthetase complex (MSC), a large multi-subunit complex which contains at least eight different aminoacyl-tRNA synthetases plus three auxillary subunits AIMP1, AIMP2 and EEF1E1. Interacts with the MSC components EPRS1, AIMP1, AIMP2 and KARS1.

Its subcellular location is the cytoplasm. It is found in the nucleus. The enzyme catalyses tRNA(Thr) + L-threonine + ATP = L-threonyl-tRNA(Thr) + AMP + diphosphate + H(+). Its function is as follows. Catalyzes the attachment of threonine to tRNA(Thr) in a two-step reaction: threonine is first activated by ATP to form Thr-AMP and then transferred to the acceptor end of tRNA(Thr). Also edits incorrectly charged tRNA(Thr) via its editing domain, at the post-transfer stage. This is Threonine--tRNA ligase 2, cytoplasmic from Homo sapiens (Human).